The primary structure comprises 25 residues: Tubulin alpha chain (25 aa).

Gln-11 provides a ligand contact to GTP.

This sequence belongs to the tubulin family. As to quaternary structure, dimer of alpha and beta chains. A typical microtubule is a hollow water-filled tube with an outer diameter of 25 nm and an inner diameter of 15 nM. Alpha-beta heterodimers associate head-to-tail to form protofilaments running lengthwise along the microtubule wall with the beta-tubulin subunit facing the microtubule plus end conferring a structural polarity. Microtubules usually have 13 protofilaments but different protofilament numbers can be found in some organisms and specialized cells. It depends on Mg(2+) as a cofactor.

The protein resides in the cytoplasm. It localises to the cytoskeleton. It catalyses the reaction GTP + H2O = GDP + phosphate + H(+). In terms of biological role, tubulin is the major constituent of microtubules, a cylinder consisting of laterally associated linear protofilaments composed of alpha- and beta-tubulin heterodimers. Microtubules grow by the addition of GTP-tubulin dimers to the microtubule end, where a stabilizing cap forms. Below the cap, tubulin dimers are in GDP-bound state, owing to GTPase activity of alpha-tubulin. The polypeptide is Tubulin alpha chain (Leptomonas seymouri).